The chain runs to 884 residues: Alanine--tRNA ligase (884 aa).

Zn(2+) is bound by residues His562, His566, Cys676, and His680.

This sequence belongs to the class-II aminoacyl-tRNA synthetase family. Zn(2+) serves as cofactor.

The protein localises to the cytoplasm. The enzyme catalyses tRNA(Ala) + L-alanine + ATP = L-alanyl-tRNA(Ala) + AMP + diphosphate. Its function is as follows. Catalyzes the attachment of alanine to tRNA(Ala) in a two-step reaction: alanine is first activated by ATP to form Ala-AMP and then transferred to the acceptor end of tRNA(Ala). Also edits incorrectly charged Ser-tRNA(Ala) and Gly-tRNA(Ala) via its editing domain. This chain is Alanine--tRNA ligase, found in Jannaschia sp. (strain CCS1).